We begin with the raw amino-acid sequence, 325 residues long: NADH-quinone oxidoreductase subunit H (325 aa).

8 helical membrane passes run 11 to 31, 81 to 101, 114 to 134, 154 to 174, 186 to 206, 237 to 257, 265 to 285, and 304 to 324; these read ILLS…CGAF, VIFT…FAIV, IGIL…LFAG, LSYE…AGSF, IWNV…GVAV, FFVG…TLFF, LPPF…FILI, and VCLP…LWQA.

This sequence belongs to the complex I subunit 1 family. NDH-1 is composed of 13 different subunits. Subunits NuoA, H, J, K, L, M, N constitute the membrane sector of the complex.

The protein localises to the cell inner membrane. It catalyses the reaction a quinone + NADH + 5 H(+)(in) = a quinol + NAD(+) + 4 H(+)(out). Its function is as follows. NDH-1 shuttles electrons from NADH, via FMN and iron-sulfur (Fe-S) centers, to quinones in the respiratory chain. The immediate electron acceptor for the enzyme in this species is believed to be ubiquinone. Couples the redox reaction to proton translocation (for every two electrons transferred, four hydrogen ions are translocated across the cytoplasmic membrane), and thus conserves the redox energy in a proton gradient. This subunit may bind ubiquinone. The polypeptide is NADH-quinone oxidoreductase subunit H (Enterobacter sp. (strain 638)).